Reading from the N-terminus, the 361-residue chain is Probable mannitol dehydrogenase (361 aa).

Zn(2+)-binding residues include cysteine 51, histidine 73, cysteine 104, cysteine 107, cysteine 110, cysteine 118, and cysteine 167.

It belongs to the zinc-containing alcohol dehydrogenase family. Zn(2+) serves as cofactor.

The enzyme catalyses D-mannitol + NAD(+) = D-mannose + NADH + H(+). Functionally, oxidizes mannitol to mannose. Provides the initial step by which translocated mannitol is committed to central metabolism and, by regulating mannitol pool size, is important in regulating salt tolerance at the cellular level. The sequence is that of Probable mannitol dehydrogenase (ELI3) from Mesembryanthemum crystallinum (Common ice plant).